A 188-amino-acid chain; its full sequence is FMN-dependent NADPH-azoreductase (188 aa).

The protein belongs to the azoreductase type 2 family. In terms of assembly, homotetramer. Requires FMN as cofactor.

Catalyzes the reductive cleavage of azo bond in aromatic azo compounds to the corresponding amines. Requires NADPH, but not NADH, as an electron donor for its activity. The polypeptide is FMN-dependent NADPH-azoreductase (azo1) (Staphylococcus epidermidis (strain ATCC 12228 / FDA PCI 1200)).